We begin with the raw amino-acid sequence, 99 residues long: TMVTKLEKDSLVSKLYNSDVALERHRHRYEFNNKYKKDLESVGLRFSGIYEEKNLVEVIEIPSLKFFVASQFHPEFTSRPNKPTPLFKGFIKAIIENNK.

The 99-residue stretch at 1–99 (TMVTKLEKDS…FIKAIIENNK (99 aa)) folds into the Glutamine amidotransferase type-1 domain. Arginine 28 contributes to the L-glutamine binding site. Active-site residues include histidine 73 and glutamate 75.

It belongs to the CTP synthase family. In terms of assembly, homotetramer.

It carries out the reaction UTP + L-glutamine + ATP + H2O = CTP + L-glutamate + ADP + phosphate + 2 H(+). The enzyme catalyses L-glutamine + H2O = L-glutamate + NH4(+). The catalysed reaction is UTP + NH4(+) + ATP = CTP + ADP + phosphate + 2 H(+). The protein operates within pyrimidine metabolism; CTP biosynthesis via de novo pathway; CTP from UDP: step 2/2. Its activity is regulated as follows. Allosterically activated by GTP, when glutamine is the substrate; GTP has no effect on the reaction when ammonia is the substrate. The allosteric effector GTP functions by stabilizing the protein conformation that binds the tetrahedral intermediate(s) formed during glutamine hydrolysis. Inhibited by the product CTP, via allosteric rather than competitive inhibition. Functionally, catalyzes the ATP-dependent amination of UTP to CTP with either L-glutamine or ammonia as the source of nitrogen. Regulates intracellular CTP levels through interactions with the four ribonucleotide triphosphates. The protein is CTP synthase of Mycoplasma capricolum subsp. capripneumoniae.